The primary structure comprises 291 residues: MILFFEYAIASGFEDEGILEEGKMMFNTLLNQFLEIDNVTSLIHKDFADDYKDFENLKIVEIEDDKDIEIKLNDILKNEKIDYALTIAPEDENILYNLTKIIEKYPVKNLGCSSNAIKVAGDKYLTYLTIKDYVKTPKTFKPKKYVIKKIDGCGGKFNLFDENFLIQEFVEGESLSVSLIVGKKIYPLSLNRQYIDERGFVGGEVNIKHRLKDEIFNEAIKAVKCIDGLNGYVGVDVIVNDEIYIIEINPRITTTIYGLKTEPSLAELLIKNANNEELTFKVEGKEFTINK.

Residues 104 to 274 form the ATP-grasp domain; the sequence is KYPVKNLGCS…LAELLIKNAN (171 aa). 131–176 lines the ATP pocket; that stretch reads KDYVKTPKTFKPKKYVIKKIDGCGGKFNLFDENFLIQEFVEGESLS. Mg(2+) contacts are provided by Asp-236, Glu-247, and Asn-249. Mn(2+) is bound by residues Asp-236, Glu-247, and Asn-249.

It depends on Mg(2+) as a cofactor. Mn(2+) serves as cofactor.

It catalyses the reaction tyramine + L-glutamate + ATP = gamma-L-glutamyltyramine + ADP + phosphate + H(+). Its pathway is cofactor biosynthesis; methanofuran biosynthesis. Functionally, catalyzes the formation of an amide bond between tyramine and the gamma carboxy group of L-glutamate. The enzyme also accepts phenylethylamine in vitro. In Methanocaldococcus fervens (strain DSM 4213 / JCM 15782 / AG86) (Methanococcus fervens), this protein is Tyramine--L-glutamate ligase.